The sequence spans 1704 residues: Nonribosomal peptide synthetase ivoA (1704 aa).

Residues 234 to 620 are adenylation; sequence EEQAIARPDQ…HGRKDLEVKI (387 aa). The Carrier domain maps to 748 to 827; sequence NLISDPSDSM…EMATKTSAVE (80 aa). Residue Ser785 is modified to O-(pantetheine 4'-phosphoryl)serine. Residues 840-1266 are epimerization (E) domain; that stretch reads FPLSPVQQMY…QELLETAVER (427 aa). The condensation stretch occupies residues 1325–1477; the sequence is VQGDWTIEKT…AQSSTPSARK (153 aa).

This sequence belongs to the NRP synthetase family.

It carries out the reaction L-tryptophan + ATP + H2O = D-tryptophan + AMP + diphosphate + H(+). Its pathway is pigment biosynthesis. Nonribosomal peptide synthetase; part of the pathway that mediates the biosynthesis of the gray-brown conidiophore pigment. The first step of the pathway is performed by the nonribosomal peptide synthetase ivoA that catalyzes ATP-dependent unidirectional stereoinversion of L-tryptophan to D-tryptophan with complete conversion. While the stereoinversion is catalyzed by the epimerization (E) domain of ivoA, the terminal condensation (C) domain stereoselectively hydrolyzes D-tryptophanyl-S-phosphopantetheine thioester and thus represents a non-canonical C domain function. D-tryptophan is acetylated, probably by an endogenous acetyltransferase. N-acetyltryptophan is further 6-hydroxylated into N-acetyl-6-hydroxytryptophan (AHT) by the cytochrome P450 monooxygenase ivoC. N-acetyl-6-hydroxytryptophan is substrate of the N-acetyl-6-hydroxytryptophan oxidase ivoB to produce the gray-brown conidiophore pigment. In Emericella nidulans (strain FGSC A4 / ATCC 38163 / CBS 112.46 / NRRL 194 / M139) (Aspergillus nidulans), this protein is Nonribosomal peptide synthetase ivoA.